We begin with the raw amino-acid sequence, 92 residues long: Small ribosomal subunit protein uS19 (92 aa).

This sequence belongs to the universal ribosomal protein uS19 family.

Protein S19 forms a complex with S13 that binds strongly to the 16S ribosomal RNA. In Cyanothece sp. (strain PCC 7425 / ATCC 29141), this protein is Small ribosomal subunit protein uS19.